Consider the following 276-residue polypeptide: Dermonecrotic toxin LsaSicTox-alphaIB2iii (276 aa).

H5 is an active-site residue. Positions 25 and 27 each coordinate Mg(2+). The Nucleophile role is filled by H41. 2 disulfides stabilise this stretch: C45–C51 and C47–C190. D85 lines the Mg(2+) pocket. N-linked (GlcNAc...) asparagine glycans are attached at residues N129 and N253.

This sequence belongs to the arthropod phospholipase D family. Class II subfamily. Mg(2+) serves as cofactor. Expressed by the venom gland.

The protein localises to the secreted. It carries out the reaction an N-(acyl)-sphingosylphosphocholine = an N-(acyl)-sphingosyl-1,3-cyclic phosphate + choline. It catalyses the reaction an N-(acyl)-sphingosylphosphoethanolamine = an N-(acyl)-sphingosyl-1,3-cyclic phosphate + ethanolamine. The enzyme catalyses a 1-acyl-sn-glycero-3-phosphocholine = a 1-acyl-sn-glycero-2,3-cyclic phosphate + choline. The catalysed reaction is a 1-acyl-sn-glycero-3-phosphoethanolamine = a 1-acyl-sn-glycero-2,3-cyclic phosphate + ethanolamine. Functionally, dermonecrotic toxins cleave the phosphodiester linkage between the phosphate and headgroup of certain phospholipids (sphingolipid and lysolipid substrates), forming an alcohol (often choline) and a cyclic phosphate. This toxin acts on sphingomyelin (SM). It may also act on ceramide phosphoethanolamine (CPE), lysophosphatidylcholine (LPC) and lysophosphatidylethanolamine (LPE), but not on lysophosphatidylserine (LPS), and lysophosphatidylglycerol (LPG). It acts by transphosphatidylation, releasing exclusively cyclic phosphate products as second products. Induces dermonecrosis, hemolysis, increased vascular permeability, edema, inflammatory response, and platelet aggregation. In Loxosceles sabina (Tucson recluse spider), this protein is Dermonecrotic toxin LsaSicTox-alphaIB2iii.